Consider the following 357-residue polypeptide: 3-dehydroquinate synthase (357 aa).

NAD(+) is bound by residues 104-108 (GVVGD), 128-129 (TT), K141, and 168-171 (FLET). 3 residues coordinate Zn(2+): E183, H243, and H260.

It belongs to the sugar phosphate cyclases superfamily. Dehydroquinate synthase family. The cofactor is Co(2+). Zn(2+) is required as a cofactor. It depends on NAD(+) as a cofactor.

The protein localises to the cytoplasm. The enzyme catalyses 7-phospho-2-dehydro-3-deoxy-D-arabino-heptonate = 3-dehydroquinate + phosphate. The protein operates within metabolic intermediate biosynthesis; chorismate biosynthesis; chorismate from D-erythrose 4-phosphate and phosphoenolpyruvate: step 2/7. In terms of biological role, catalyzes the conversion of 3-deoxy-D-arabino-heptulosonate 7-phosphate (DAHP) to dehydroquinate (DHQ). The polypeptide is 3-dehydroquinate synthase (Streptococcus pyogenes serotype M5 (strain Manfredo)).